The primary structure comprises 161 residues: ATP synthase subunit b (161 aa).

A helical membrane pass occupies residues 1–21 (MYLNATILGQVIAFILFVWFC).

This sequence belongs to the ATPase B chain family. As to quaternary structure, F-type ATPases have 2 components, F(1) - the catalytic core - and F(0) - the membrane proton channel. F(1) has five subunits: alpha(3), beta(3), gamma(1), delta(1), epsilon(1). F(0) has three main subunits: a(1), b(2) and c(10-14). The alpha and beta chains form an alternating ring which encloses part of the gamma chain. F(1) is attached to F(0) by a central stalk formed by the gamma and epsilon chains, while a peripheral stalk is formed by the delta and b chains.

Its subcellular location is the cell inner membrane. F(1)F(0) ATP synthase produces ATP from ADP in the presence of a proton or sodium gradient. F-type ATPases consist of two structural domains, F(1) containing the extramembraneous catalytic core and F(0) containing the membrane proton channel, linked together by a central stalk and a peripheral stalk. During catalysis, ATP synthesis in the catalytic domain of F(1) is coupled via a rotary mechanism of the central stalk subunits to proton translocation. In terms of biological role, component of the F(0) channel, it forms part of the peripheral stalk, linking F(1) to F(0). The chain is ATP synthase subunit b from Blochmanniella floridana.